We begin with the raw amino-acid sequence, 1132 residues long: Protein CROWDED NUCLEI 1 (1132 aa).

The interval Met1–Leu31 is disordered. Polar residues predominate over residues Arg10–Gly28. Positions Leu73 to Phe714 form a coiled coil. 2 short sequence motifs (nuclear localization signal) span residues Glu379–Lys386 and Ile693–Leu700. Phosphoserine occurs at positions 774 and 803. Positions Ala849–Glu859 are enriched in basic and acidic residues. 4 disordered regions span residues Ala849–Asp871, Ser883–Val909, Ile924–Glu1039, and Gly1061–Thr1132. A compositionally biased stretch (polar residues) spans Thr861–Asp871. Residues Ser865 and Ser883 each carry the phosphoserine modification. Over residues Met895–Arg907 the composition is skewed to basic residues. A Phosphoserine modification is found at Ser908. Phosphoserine occurs at positions 1093, 1105, and 1112. Basic and acidic residues predominate over residues Asp1095–Ser1105.

The protein belongs to the CRWN family. In terms of assembly, core component of the LINC complex which is composed of inner nuclear membrane SUN domain-containing proteins coupled to outer nuclear membrane WIP and WIT proteins. The LINC complex also involves nucleoskeletal proteins CRWN/LINC and possibly KAKU4 and the cytoskeletal myosin KAKU1. Interacts with SUN1 and SUN2. Binds to KAKU4. Expressed at low levels in roots, leaves, flowers and flower stalks.

It localises to the nucleus membrane. Its subcellular location is the nucleus. The protein resides in the nucleoplasm. It is found in the nucleus lamina. Functionally, component of SUN-protein-containing multivariate complexes also called LINC complexes which link the nucleoskeleton and cytoskeleton by providing versatile outer nuclear membrane attachment sites for cytoskeletal filaments. Required for nucleus structure organization (e.g. size and shape). In Arabidopsis thaliana (Mouse-ear cress), this protein is Protein CROWDED NUCLEI 1.